Consider the following 419-residue polypeptide: Tetraspanning orphan receptor (419 aa).

Residues 1–28 are Cytoplasmic-facing; sequence MPRAPALLTNDARHQFTCCLCLHVRTGT. Residues 29-49 traverse the membrane as a helical segment; that stretch reads IIFGITQIIIQLVFISFLFLM. Residues 50–165 lie on the Extracellular side of the membrane; the sequence is TFNPRLIPED…EVKIKHFSPY (116 aa). A helical transmembrane segment spans residues 166 to 186; that stretch reads IAVCVTTFSLAFCCFMVHGAI. Over 187 to 193 the chain is Cytoplasmic; it reads TKQPTHL. The helical transmembrane segment at 194 to 214 threads the bilayer; it reads LPFFFIQVFDLIICLIHILGF. The Extracellular segment spans residues 215–240; it reads MSSTSDLRLMIHTKTGPIYIKSTGFT. A helical transmembrane segment spans residues 241–261; it reads FIILSISCMMLAFKAYCLGMV. Over 262-419 the chain is Cytoplasmic; the sequence is WDCYKYLMLN…SAPSNAHSSC (158 aa). A compositionally biased stretch (low complexity) spans 303 to 316; the sequence is NNSIGNSGSPNEPN. The interval 303-328 is disordered; sequence NNSIGNSGSPNEPNTRPRPEPITYDP.

In terms of assembly, interacts (via N-terminal extracellular domain) with human C2a. Phosphorylated on tyrosine residues.

It is found in the cell membrane. Cell surface receptor that binds to human complement C2a protein. This results in inhibition of the classical and lectin pathways of complement activation, probably due to interference with binding of C2a to C4b and interference with cleavage by C1 or MASP2 such that C3 convertase cannot be formed. This infers resistance to complement-mediated cell lysis, allowing parasite survival and infection. In Schistosoma mansoni (Blood fluke), this protein is Tetraspanning orphan receptor.